Here is a 188-residue protein sequence, read N- to C-terminus: PRA1 family protein 3 (188 aa).

N-acetylmethionine is present on M1. The Cytoplasmic segment spans residues 1–35 (MDVNIAPLRAWDDFFPGSDRFARPDFRDISKWNNR). 2 consecutive transmembrane segments (helical) span residues 36–56 (VVSN…MMIS) and 57–77 (VVGF…VLVF). At 78-93 (TGFVWAAHNKDILRRM) the chain is on the cytoplasmic side. Transmembrane regions (helical) follow at residues 94–114 (KKQY…FLIS) and 115–135 (LFGG…LMFI). The tract at residues 103–117 (MVVMLASYFLISLFG) is required for homodimer formation and heterodimer formation with ARL6IP1. The Cytoplasmic segment spans residues 136 to 188 (HASLRLRNLKNKLENKMEEIGLKRTPMGIVLDALEQQEETITKFSDYISKMKE). The interval 136-188 (HASLRLRNLKNKLENKMEEIGLKRTPMGIVLDALEQQEETITKFSDYISKMKE) is targeting to endoplasmic reticulum membrane.

It belongs to the PRA1 family. In terms of assembly, homodimer. Heterodimer with ARL6IP1. Forms multimers. Interacts with ARL6. Interacts with prenylated RAB1A and RAB3A. Interacts with SLC1A1/EAAC1. Interacts with RTN2 (via first transmembrane domain). Does not interact with VAMP1, VAMP2 or VAMP3.

The protein localises to the endoplasmic reticulum membrane. It is found in the cell membrane. It localises to the cytoplasm. The protein resides in the cytoskeleton. Its function is as follows. Regulates intracellular concentrations of taurine and glutamate. Negatively modulates SLC1A1/EAAC1 glutamate transport activity by decreasing its affinity for glutamate in a PKC activity-dependent manner. Plays a role in the retention of SLC1A1/EAAC1 in the endoplasmic reticulum. In Bos taurus (Bovine), this protein is PRA1 family protein 3 (ARL6IP5).